The primary structure comprises 362 residues: DLA class I histocompatibility antigen, A9/A9 alpha chain (362 aa).

A signal peptide spans Met1–Ala24. The alpha-1 stretch occupies residues Gly25–Ala114. Over Gly25–Thr306 the chain is Extracellular. Asn110 is a glycosylation site (N-linked (GlcNAc...) asparagine). Positions Gly115–Ala207 are alpha-2. 2 disulfides stabilise this stretch: Cys125–Cys189 and Cys228–Cys284. The alpha-3 stretch occupies residues Asp208–Trp299. Positions Pro210–Thr296 constitute an Ig-like C1-type domain. The tract at residues Glu300–Thr306 is connecting peptide. Residues Ile307–Trp329 traverse the membrane as a helical segment. Residues Arg330–Val362 are Cytoplasmic-facing. The interval Arg333 to Val362 is disordered.

It belongs to the MHC class I family. In terms of assembly, heterodimer of an alpha chain and a beta chain (beta-2-microglobulin).

It is found in the membrane. Involved in the presentation of foreign antigens to the immune system. The sequence is that of DLA class I histocompatibility antigen, A9/A9 alpha chain from Canis lupus familiaris (Dog).